A 165-amino-acid chain; its full sequence is Probable deoxyuridine 5'-triphosphate nucleotidohydrolase (165 aa).

Over residues 39 to 49 (GRIDTDGKTIG) the composition is skewed to basic and acidic residues. Residues 39–64 (GRIDTDGKTIGDRSPVTPTADEDSTD) are disordered.

It belongs to the dCTP deaminase family. Archaeal dUTPase subfamily.

The enzyme catalyses dUTP + H2O = dUMP + diphosphate + H(+). It participates in pyrimidine metabolism; dUMP biosynthesis; dUMP from dCTP (dUTP route): step 2/2. This enzyme is involved in nucleotide metabolism: it produces dUMP, the immediate precursor of thymidine nucleotides and it decreases the intracellular concentration of dUTP so that uracil cannot be incorporated into DNA. The sequence is that of Probable deoxyuridine 5'-triphosphate nucleotidohydrolase from Halobacterium salinarum (strain ATCC 29341 / DSM 671 / R1).